Here is a 353-residue protein sequence, read N- to C-terminus: UPF0283 membrane protein YcjF (353 aa).

The span at 1–19 (MSEPLKPRIDFAEPLKEEP) shows a compositional bias: basic and acidic residues. Residues 1–48 (MSEPLKPRIDFAEPLKEEPTSAFKAQQTFSEAESHTFAPAAIDERPED) are disordered. The Periplasmic portion of the chain corresponds to 1–69 (MSEPLKPRID…LRPKRSLWRK (69 aa)). The chain crosses the membrane as a helical span at residues 70–90 (MVMGGLALFGASVVGQGVQWT). Over 91–99 (MNAWQTQDW) the chain is Cytoplasmic. The helical transmembrane segment at 100 to 120 (VALGGCAAGALIVGAGVGSVV) threads the bilayer. Residues 121-212 (TEWWRLWRLR…ARREISRFAA (92 aa)) lie on the Periplasmic side of the membrane. Residues 213–233 (ESTLMIAVSPLALVDMAFIAW) form a helical membrane-spanning segment. Residues 234–353 (RNLRLINRIA…LQKSKSSPEK (120 aa)) are Cytoplasmic-facing.

It belongs to the UPF0283 family.

It localises to the cell inner membrane. This Salmonella typhi protein is UPF0283 membrane protein YcjF (ycjF).